A 243-amino-acid polypeptide reads, in one-letter code: Outer membrane protein A (243 aa).

Transmembrane regions (beta stranded) follow at residues 1–8 (LTAKLGYP), 13–21 (LDIYTRLGG), 48–57 (PVFAGGVEWA), 62–69 (IATRLEYQ), and 88–96 (LLSLGVSYR). 4 tandem repeats follow at residues 107–108 (AP), 109–110 (AP), 111–112 (AP), and 113–114 (AP). The interval 107–114 (APAPAPAP) is 4 X 2 AA tandem repeats of A-P. One can recognise an OmpA-like domain in the interval 116 to 243 (VQTKHFTLKS…RRVEIEVKGI (128 aa)). A disulfide bridge links Cys217 with Cys229.

Belongs to the outer membrane OOP (TC 1.B.6) superfamily. OmpA family. In terms of assembly, monomer and homodimer.

Its subcellular location is the cell outer membrane. With TolR probably plays a role in maintaining the position of the peptidoglycan cell wall in the periplasm. Acts as a porin with low permeability that allows slow penetration of small solutes; an internal gate slows down solute passage. Functionally, required for conjugation with F-type plasmids; probably serves as the mating receptor on recipient cells. The chain is Outer membrane protein A from Escherichia fergusonii.